We begin with the raw amino-acid sequence, 474 residues long: Nitrosuccinate lyase (474 aa).

Catalysis depends on S295, which acts as the Proton acceptor. Fumarate-binding residues include K301 and N303. The Proton donor role is filled by R334.

It belongs to the class-II fumarase/aspartase family.

The enzyme catalyses 2-nitrobutanedioate = fumarate + nitrite + H(+). Its function is as follows. Involved in the biosynthesis of desferrioxamine derivatives which have iron-binding properties and may act as siderophores. Catalyzes the formation of nitrous acid from nitrosuccinic acid (2-nitrobutanedioate) by elimination of its nitro group. In Streptomyces davaonensis (strain DSM 101723 / JCM 4913 / KCC S-0913 / 768), this protein is Nitrosuccinate lyase.